Reading from the N-terminus, the 360-residue chain is Insulin gene enhancer protein ISL-2 (360 aa).

LIM zinc-binding domains follow at residues 25-86 and 87-149; these read AMCV…RLFG and IKCA…LLER. The tract at residues 151–177 is disordered; it reads AAGSPRSPGPLPGTPPGLHLPDAGSGQ. Phosphoserine occurs at positions 154 and 157. The segment at residues 192–251 is a DNA-binding region (homeobox); that stretch reads TTRVRTVLNEKQLHTLRTCYAANPRPDALMKEQLVEMTGLSPRVIRVWFQNKRCKDKKKS. The LIM-binding domain (LID) stretch occupies residues 273–302; that stretch reads GTLLVAGSPSAHENAVQGSAVEVQTYQPPW. Phosphoserine is present on Ser280. Residues 328 to 337 are compositionally biased toward low complexity; the sequence is SGSLGNSSGS. The tract at residues 328 to 360 is disordered; it reads SGSLGNSSGSDVTSLSSQLPDTPNSMVPSPVET. The segment covering 338–360 has biased composition (polar residues); the sequence is DVTSLSSQLPDTPNSMVPSPVET.

In terms of assembly, interacts with LHX4.

The protein localises to the nucleus. Functionally, transcriptional factor that defines subclasses of motoneurons that segregate into columns in the spinal cord and select distinct axon pathways. This is Insulin gene enhancer protein ISL-2 (Isl2) from Rattus norvegicus (Rat).